Consider the following 345-residue polypeptide: Dihydroorotate dehydrogenase (quinone) (345 aa).

Residues 65–69 (AGLDK) and Thr-89 each bind FMN. Lys-69 contributes to the substrate binding site. 114 to 118 (NRMGF) is a substrate binding site. Residues Asn-142 and Asn-175 each coordinate FMN. Asn-175 serves as a coordination point for substrate. Ser-178 functions as the Nucleophile in the catalytic mechanism. Asn-180 lines the substrate pocket. 2 residues coordinate FMN: Lys-220 and Thr-248. Residue 249-250 (NT) coordinates substrate. FMN-binding positions include Gly-271, Gly-300, and 321 to 322 (YT).

It belongs to the dihydroorotate dehydrogenase family. Type 2 subfamily. In terms of assembly, monomer. FMN serves as cofactor.

The protein localises to the cell membrane. It carries out the reaction (S)-dihydroorotate + a quinone = orotate + a quinol. Its pathway is pyrimidine metabolism; UMP biosynthesis via de novo pathway; orotate from (S)-dihydroorotate (quinone route): step 1/1. Functionally, catalyzes the conversion of dihydroorotate to orotate with quinone as electron acceptor. The sequence is that of Dihydroorotate dehydrogenase (quinone) from Burkholderia multivorans (strain ATCC 17616 / 249).